The primary structure comprises 296 residues: Cytidine deaminase (296 aa).

2 consecutive CMP/dCMP-type deaminase domains span residues 47–167 (DSHE…FGPA) and 186–296 (ESDD…VDPV). 88–90 (NLE) serves as a coordination point for substrate. His101 contributes to the Zn(2+) binding site. Glu103 acts as the Proton donor in catalysis. 2 residues coordinate Zn(2+): Cys128 and Cys131.

It belongs to the cytidine and deoxycytidylate deaminase family. Homodimer. Requires Zn(2+) as cofactor.

The catalysed reaction is cytidine + H2O + H(+) = uridine + NH4(+). The enzyme catalyses 2'-deoxycytidine + H2O + H(+) = 2'-deoxyuridine + NH4(+). Its function is as follows. This enzyme scavenges exogenous and endogenous cytidine and 2'-deoxycytidine for UMP synthesis. The sequence is that of Cytidine deaminase from Shewanella amazonensis (strain ATCC BAA-1098 / SB2B).